We begin with the raw amino-acid sequence, 325 residues long: Heat-inducible transcription repressor HrcA (325 aa).

Belongs to the HrcA family.

Functionally, negative regulator of class I heat shock genes (grpE-dnaK-dnaJ and groELS operons). Prevents heat-shock induction of these operons. In Staphylococcus haemolyticus (strain JCSC1435), this protein is Heat-inducible transcription repressor HrcA.